Reading from the N-terminus, the 951-residue chain is Serine/threonine-protein kinase ATG1 (951 aa).

Residues 22 to 327 (FTINEEIGKG…FPEYFAHPVV (306 aa)) form the Protein kinase domain. ATP-binding positions include 28–36 (IGKGSFATV) and Lys51. The active-site Proton acceptor is Asp165. Disordered regions lie at residues 343–375 (IITP…PVET), 387–458 (EQAP…YDEQ), 514–573 (HIPK…SSPS), and 924–951 (HQSM…TPPH). Composition is skewed to basic and acidic residues over residues 359 to 368 (SLRERQRENP) and 432 to 442 (PRQRDRTERHY). Polar residues-rich tracts occupy residues 547 to 573 (AQGN…SSPS) and 939 to 951 (GGTT…TPPH).

The protein belongs to the protein kinase superfamily. Ser/Thr protein kinase family. APG1/unc-51/ULK1 subfamily. In terms of assembly, homodimer. Forms a ternary complex with ATG13 and ATG17.

It is found in the cytoplasm. It localises to the preautophagosomal structure membrane. It carries out the reaction L-seryl-[protein] + ATP = O-phospho-L-seryl-[protein] + ADP + H(+). The enzyme catalyses L-threonyl-[protein] + ATP = O-phospho-L-threonyl-[protein] + ADP + H(+). Serine/threonine protein kinase involved in the cytoplasm to vacuole transport (Cvt) and found to be essential in autophagy, where it is required for the formation of autophagosomes. Involved in the clearance of protein aggregates which cannot be efficiently cleared by the proteasome. Required for selective autophagic degradation of the nucleus (nucleophagy) as well as for mitophagy which contributes to regulate mitochondrial quantity and quality by eliminating the mitochondria to a basal level to fulfill cellular energy requirements and preventing excess ROS production. Also involved in endoplasmic reticulum-specific autophagic process, in selective removal of ER-associated degradation (ERAD) substrates. Plays a key role in ATG9 and ATG23 cycling through the pre-autophagosomal structure and is necessary to promote ATG18 binding to ATG9 through phosphorylation of ATG9. Catalyzes phosphorylation of ATG4, decreasing the interaction between ATG4 and ATG8 and impairing deconjugation of PE-conjugated forms of ATG8. This is Serine/threonine-protein kinase ATG1 from Sclerotinia sclerotiorum (strain ATCC 18683 / 1980 / Ss-1) (White mold).